Consider the following 241-residue polypeptide: Ribonuclease 3 (241 aa).

The RNase III domain occupies 8–137 (LTLLKNRLGI…LLGAVYLDQG (130 aa)). A Mg(2+)-binding site is contributed by E50. The active site involves D54. Mg(2+) contacts are provided by D123 and E126. Residue E126 is part of the active site. A DRBM domain is found at 164 to 233 (DYKTELQELV…AKKALMKSDL (70 aa)). Residues 214–241 (RSKKEAEQQAAKKALMKSDLGSACNHKK) are disordered.

Belongs to the ribonuclease III family. As to quaternary structure, homodimer. Mg(2+) is required as a cofactor.

It localises to the cytoplasm. It catalyses the reaction Endonucleolytic cleavage to 5'-phosphomonoester.. Functionally, digests double-stranded RNA. Involved in the processing of primary rRNA transcript to yield the immediate precursors to the large and small rRNAs (23S and 16S). Processes some mRNAs, and tRNAs when they are encoded in the rRNA operon. Processes pre-crRNA and tracrRNA of type II CRISPR loci if present in the organism. This Pelotomaculum thermopropionicum (strain DSM 13744 / JCM 10971 / SI) protein is Ribonuclease 3.